A 155-amino-acid chain; its full sequence is 6,7-dimethyl-8-ribityllumazine synthase (155 aa).

5-amino-6-(D-ribitylamino)uracil is bound by residues phenylalanine 22, 57–59, and 81–83; these read AVE and TVI. 86-87 lines the (2S)-2-hydroxy-3-oxobutyl phosphate pocket; it reads GT. Residue histidine 89 is the Proton donor of the active site. Residue phenylalanine 114 participates in 5-amino-6-(D-ribitylamino)uracil binding. Arginine 128 is a binding site for (2S)-2-hydroxy-3-oxobutyl phosphate.

The protein belongs to the DMRL synthase family. As to quaternary structure, forms an icosahedral capsid composed of 60 subunits, arranged as a dodecamer of pentamers.

It catalyses the reaction (2S)-2-hydroxy-3-oxobutyl phosphate + 5-amino-6-(D-ribitylamino)uracil = 6,7-dimethyl-8-(1-D-ribityl)lumazine + phosphate + 2 H2O + H(+). Its pathway is cofactor biosynthesis; riboflavin biosynthesis; riboflavin from 2-hydroxy-3-oxobutyl phosphate and 5-amino-6-(D-ribitylamino)uracil: step 1/2. Catalyzes the formation of 6,7-dimethyl-8-ribityllumazine by condensation of 5-amino-6-(D-ribitylamino)uracil with 3,4-dihydroxy-2-butanone 4-phosphate. This is the penultimate step in the biosynthesis of riboflavin. The protein is 6,7-dimethyl-8-ribityllumazine synthase of Psychromonas ingrahamii (strain DSM 17664 / CCUG 51855 / 37).